The primary structure comprises 477 residues: Stromelysin-1 (477 aa).

Residues 1 to 17 (MKGLPVLLWLCVVVCSS) form the signal peptide. Positions 18 to 99 (YPLHDSARDD…PRCGVPDVGG (82 aa)) are cleaved as a propeptide — activation peptide. A Cysteine switch motif is present at residues 90-97 (PRCGVPDV). Residue C92 participates in Zn(2+) binding. Ca(2+) is bound by residues D124 and D158. Zn(2+)-binding residues include H168 and D170. D175, G176, G178, and V180 together coordinate Ca(2+). Position 183 (H183) interacts with Zn(2+). Residues G190, N192, and D194 each contribute to the Ca(2+) site. Residue H196 coordinates Zn(2+). 3 residues coordinate Ca(2+): D198, D199, and E201. Residue H218 coordinates Zn(2+). E219 is a catalytic residue. The Zn(2+) site is built by H222 and H228. Hemopexin repeat units follow at residues 287–336 (SPMC…WPSL), 337–383 (PSNM…GLPA), 385–433 (VKKI…FPGV), and 434–477 (DSRV…WFNC). Residues C290 and C477 are joined by a disulfide bond. D297 contributes to the Ca(2+) binding site. Ca(2+) contacts are provided by D389 and D438.

Belongs to the peptidase M10A family. Ca(2+) is required as a cofactor. It depends on Zn(2+) as a cofactor.

The protein resides in the secreted. The protein localises to the extracellular space. It is found in the extracellular matrix. The catalysed reaction is Preferential cleavage where P1', P2' and P3' are hydrophobic residues.. Functionally, metalloproteinase with a rather broad substrate specificity that can degrade fibronectin, laminin, gelatins of type I, III, IV, and V; collagens III, IV, X, and IX, and cartilage proteoglycans. Activates different molecules including growth factors, plasminogen or other matrix metalloproteinases such as MMP9. Once released into the extracellular matrix (ECM), the inactive pro-enzyme is activated by the plasmin cascade signaling pathway. Also acts intracellularly. For example, in dopaminergic neurons, gets activated by the serine protease HTRA2 upon stress and plays a pivotal role in DA neuronal degeneration by mediating microglial activation and alpha-synuclein/SNCA cleavage. In addition, plays a role in immune response and possesses antiviral activity against various viruses. Mechanistically, translocates from the cytoplasm into the cell nucleus upon virus infection to influence NF-kappa-B activities. The chain is Stromelysin-1 (Mmp3) from Mus musculus (Mouse).